We begin with the raw amino-acid sequence, 681 residues long: Cobalamin-dependent radical SAM methyltransferase TokK (681 aa).

The B12-binding domain occupies 1–144 (MSAELASRGR…ATRLSDHPDY (144 aa)). Cob(II)alamin contacts are provided by Asn18, Ser72, Tyr74, Val75, His103, Gly126, and Glu127. In terms of domain architecture, Radical SAM core spans 192-417 (RGLRFYALWE…RMYVERPGTP (226 aa)). Residues Cys206 and Cys210 each contribute to the [4Fe-4S] cluster site. Residue Phe212 participates in 5'-deoxyadenosine binding. [4Fe-4S] cluster is bound at residue Cys213. Residues Asp214 and Cys249 each contribute to the cob(II)alamin site. The 5'-deoxyadenosine site is built by Gln312, Glu349, and Gly384.

It belongs to the methyltransferase superfamily. Requires [4Fe-4S] cluster as cofactor. The cofactor is cob(II)alamin.

It functions in the pathway antibiotic biosynthesis. Functionally, methyltransferase involved in the biosynthesis of the beta-lactam carbapenem antibiotic asparenomycin. Catalyzes three consecutive S-adenosyl-L-methionine-dependent methylations to build out the C6-isopropyl side chain in a stereocontrolled manner. The sequence is that of Cobalamin-dependent radical SAM methyltransferase TokK from Streptomyces tokunonensis.